The sequence spans 296 residues: NAD kinase (296 aa).

The active-site Proton acceptor is the D72. Residues 72–73 (DG), 146–147 (ND), R157, K174, D176, 187–192 (TAYALS), and Q247 each bind NAD(+).

It belongs to the NAD kinase family. It depends on a divalent metal cation as a cofactor.

Its subcellular location is the cytoplasm. It carries out the reaction NAD(+) + ATP = ADP + NADP(+) + H(+). In terms of biological role, involved in the regulation of the intracellular balance of NAD and NADP, and is a key enzyme in the biosynthesis of NADP. Catalyzes specifically the phosphorylation on 2'-hydroxyl of the adenosine moiety of NAD to yield NADP. The sequence is that of NAD kinase from Pseudomonas syringae pv. tomato (strain ATCC BAA-871 / DC3000).